A 1541-amino-acid chain; its full sequence is MAALGTGGYVRNDAVEKLPTIMAGVPARRAQSSPPPAPPLCLRRRTRLTAAPEDAVQNRVSLEKVLGITAQNSSGLTCDPGTGHVAYLAGCVVVILNPKENKQQHILNTARKSLSALAFSPDGKYIVTGENGHRPAVRIWDVEEKNQVAEMLGHKYGVACVAFSPNMKHIVSMGYQHDMVLNVWDWKKDIVVASNKVSCRVIALSFSEDSSYFVTVGNRHVRFWFLEVSTEAKVTGTVPLVGRSGILGELHDNVFCGVACGRGQMAGSTFCVSYSGLLCQFNEKRVLEKWINLKVSLSSCLCVSQELIFCGCTDGIVRIFQAHSLHYLANLPKPHYLGVDVAQGLEPSFLFHRKAEAVYPDTVALTFDPNHQWLSCVYKDHSIYIWDVKDINKVGKMWSELFHSSYVWNVEVYPEFEDQRACLPSGSFLTCSSDNTIRFWNLDSNPDSHWQKNIFSDTLLKVVYVESDIQHLQDMSHFPDRGSENGMAVDMKAGVRVMQVSPDGQHLASGDRSGNLRIHELHFMDELVRVEAHDAEVLCLEYSKPETGLTLLASASRDRLIHVLNVEKNYSLEQTLDDHSSSITAVKFTGSRDIQMISCGADKSIYFRSAQQASDGLHFVRTHHVAEKTTLYDMDIDITQKYVAVACQDRNVRVYNTVNGKQKKCYKGSQGDEGSLLKVHVDPSGTFLATSCSDKSISVIDFYSGECVAKMFGHSEIITGMKFTYDCRHLITVSGDSCVFIWHLGPEITNCMKQHLLEIDQREQPQQNTKDGKWSRDPRQETCTSMPSEISLSPGEQTEDELEEECEPEELLKTPSKESLDSDPRCLLTNGKLPLWAKRLLGDDDVADGSAFHAKRSYQPHGRWAERADQEPLKTILDARDLDCYFTPMKPESLEDSILDTVESQRLAGLLSQSESPQEDGCRHPSLTPPQRESSEVSELLCSLESEVTITGTDSKPCAEEGEGAPGDQQDDFYLRVPSITSKDLNPPEDSGESEADLECSFTAVHSPPRPDPDPPFDVAVPPAPGCPGATEELARPEVPGLSNGSLPQTPEQEKFLRHHFETLTDAPAEELFHGSLRDLKASEAKDDFFNPRLSISAQFLSRFQKPSRFTHTFPTRLPRHPMQSPEVKLTDLAGSQPRAEPLRAGTGYTSPGRTNVLSAGKAEEPLEAWSPLTSCLTGLAPCVSSSSVPPTDKTPPTPTALPTPGLAQGVHTPATSSYVEATAGSRAKMSRSISLEDSKGPVLAELARPPCRPSSLGELSSLGQELRAITTTVTPSSDSEGQEPALPSRGNHEARASLKLTLSSICDRLLLPPPQLEPSAMCVWSQEPVAIQPNVMVTTASFSAPSPVNVSASRLHNSTFLPRFLAPEPLNTSAHPNSPPLPEARPGVPGNITSLLESAPDALSPVHRCPGHCGQPRVPARVPPPGPLELSNVGSIVHRLQTAFQEALDLYHMMVSRDEVSAEQQQAQTELASTFLWIHSQLEANDWLVGTDGAPAQALPSPGPPSPPTLCPLASPDLHALLEHYSELLVQAVRRKAQRD.

Ala-2 bears the N-acetylalanine mark. Ser-33 is subject to Phosphoserine. Thr-46 is modified (phosphothreonine). 12 WD repeats span residues 109–150 (TARK…QVAE), 153–194 (GHKY…VVAS), 196–234 (KVSCRVIALSFSEDSSYFVTVGNRHVRFWFLEVSTEAKV), 291–330 (INLKVSLSSCLCVSQELIFCGCTDGIVRIFQAHSLHYLAN), 357–396 (AVYPDTVALTFDPNHQWLSCVYKDHSIYIWDVKDINKVGK), 402–450 (FHSS…DSHW), 490–529 (DMKAGVRVMQVSPDGQHLASGDRSGNLRIHELHFMDELVR), 532–574 (AHDA…SLEQ), 578–618 (DHSS…DGLH), 626–665 (AEKTTLYDMDIDITQKYVAVACQDRNVRVYNTVNGKQKKC), 671–713 (GDEG…KMFG), and 714–752 (HSEIITGMKFTYDCRHLITVSGDSCVFIWHLGPEITNCM). At Ser-501 the chain carries Phosphoserine. Disordered stretches follow at residues 762–820 (REQP…KESL) and 911–1050 (LSQS…LPQT). Positions 770–780 (KDGKWSRDPRQ) are enriched in basic and acidic residues. Polar residues predominate over residues 781-795 (ETCTSMPSEISLSPG). Positions 797-809 (QTEDELEEECEPE) are enriched in acidic residues. One copy of the WD 13 repeat lies at 803 to 846 (EEECEPEELLKTPSKESLDSDPRCLLTNGKLPLWAKRLLGDDDV). The span at 810-820 (ELLKTPSKESL) shows a compositional bias: basic and acidic residues. Positions 937 to 948 (VSELLCSLESEV) are enriched in low complexity. Ser-943 bears the Phosphoserine mark. Residues 1008 to 1026 (PPRPDPDPPFDVAVPPAPG) are compositionally biased toward pro residues. At Thr-1050 the chain carries Phosphothreonine. Residues Ser-1095, Ser-1125, and Ser-1151 each carry the phosphoserine modification. Disordered stretches follow at residues 1133-1153 (LAGSQPRAEPLRAGTGYTSPG) and 1185-1212 (SSSSVPPTDKTPPTPTALPTPGLAQGVH). A WD 14 repeat occupies 1138–1180 (PRAEPLRAGTGYTSPGRTNVLSAGKAEEPLEAWSPLTSCLTGL). A compositionally biased stretch (pro residues) spans 1193 to 1202 (DKTPPTPTAL). 3 positions are modified to phosphoserine: Ser-1235, Ser-1255, and Ser-1256. The segment at 1273 to 1293 (TVTPSSDSEGQEPALPSRGNH) is disordered. Thr-1275 carries the phosphothreonine modification.

In terms of assembly, can form homodimers (via C-terminus). Interacts (via C-terminus) with MAPKBP1 (via C-terminus). Interacts with CDK5RAP2, CEP152, CEP63 and KIAA0753. CEP63, CDK5RAP2, CEP152, WDR62 are proposed to form a stepwise assembled complex at the centrosome forming a ring near parental centrioles.

The protein resides in the nucleus. It is found in the cytoplasm. Its subcellular location is the cytoskeleton. It localises to the spindle pole. The protein localises to the microtubule organizing center. The protein resides in the centrosome. It is found in the centriole. Required for cerebral cortical development. Plays a role in neuronal proliferation and migration. Plays a role in mother-centriole-dependent centriole duplication; the function seems also to involve CEP152, CDK5RAP2 and CEP63 through a stepwise assembled complex at the centrosome that recruits CDK2 required for centriole duplication. The polypeptide is WD repeat-containing protein 62 (WDR62) (Sus scrofa (Pig)).